A 265-amino-acid chain; its full sequence is Oxidoreductase nsrR (265 aa).

The protein belongs to the avfA family.

It participates in secondary metabolite biosynthesis. Oxidoreductase; part of the gene cluster that mediates the biosynthesis of the tetrahydroxanthone dimer neosartorin, which exhibits antibacterial activity. The two different monomeric units appear to be synthesized by the same set of enzymes, among which the Baeyer-Villiger monooxygenase nsrF is the key enzyme for the divergence of the biosynthetic routes. The pathway begins with the synthesis of atrochrysone thioester by the polyketide synthase nsrB. The atrochrysone carboxyl ACP thioesterase nsrC then breaks the thioester bond and releases the atrochrysone carboxylic acid from AacuL. Atrochrysone carboxylic acid is decarboxylated by the decarboxylase nsrE, and oxidized by the anthrone oxygenase nsrD to yield emodin. Emodin is then reduced to emodin hydroquinone by the oxidoreductase nsrR. A-ring reduction by the short chain dehydrogenase nsrJ, dehydration by the scytalone dehydratase-like protein nsrI and probable spontaneous re-oxidation, results in overall deoxygenation to chrysophanol. The Baeyer-Villiger monooxygenase nsrF accepts chrysophanol as a substrate to insert one oxygen atom at two different positions to yield the precursors of both monomric units. NsrF is promiscuous/flexible in interacting with the 2 (non methylated and methylated) aromatic rings of chrysophanol, thus diverging the biosynthetic pathway at this point. After the hydrolysis of the lactones, methylesterification by the methyltransferase nsrG yields respectively moniliphenone and 2,2',6'-trihydroxy-4-methyl-6-methoxya-cyldiphenylmethanone. The next steps are the hydroxylation by the FAD-dependent monooxygenase nsrK, followed by isomerization by the monooxygenase nsrQ. The short chain dehydrogenase/reductase nsrO then catalyzes the C-5 ketoreduction to give the xanthone skeleton of blennolide C and 5-acetylblennolide A. The acetyltransferase nsrL has a strict substrate specificity and uses only blennolide A but not blennolide C to yield 5-acetylblennolide A as the single-acetylated product. In the final step of the biosynthesis, the heterodimerization of the 2 xanthones, blennolide C and 5-acetylblennolide A, is catalyzed by the cytochrome P450 monooxygenase nsrP. NsrP can utilize at least three different xanthones as its substrates to perform the dimerization reaction. This Aspergillus novofumigatus (strain IBT 16806) protein is Oxidoreductase nsrR.